The primary structure comprises 61 residues: Large ribosomal subunit protein bL32 (61 aa).

The segment covering 1–18 has biased composition (basic residues); it reads MAIVPKRKTSKQRKRKRQ. A disordered region spans residues 1-20; the sequence is MAIVPKRKTSKQRKRKRQTH.

It belongs to the bacterial ribosomal protein bL32 family.

The protein is Large ribosomal subunit protein bL32 (rpmF) of Mycoplasmopsis pulmonis (strain UAB CTIP) (Mycoplasma pulmonis).